The following is a 247-amino-acid chain: GTP cyclohydrolase 1 type 2 homolog (247 aa).

H63, H64, D101, H215, and E219 together coordinate a divalent metal cation.

It belongs to the GTP cyclohydrolase I type 2/NIF3 family. In terms of assembly, toroid-shaped homohexamer. In the hexamer, 3 dimers assemble to form a ring-like structure surrounding a central hole.

Functionally, provides significant protection from radiation damage and may be involved in the degradation of radiation-damaged nucleotides. The protein is GTP cyclohydrolase 1 type 2 homolog (ybgI) of Salmonella typhi.